The primary structure comprises 142 residues: Small heat shock protein IbpB (142 aa).

Positions 26–137 (AGESQSFPPY…AAQRIAISER (112 aa)) constitute a sHSP domain.

The protein belongs to the small heat shock protein (HSP20) family. As to quaternary structure, homodimer. Forms homomultimers of about 100-150 subunits at optimal growth temperatures. Conformation changes to oligomers at high temperatures or high ionic concentrations. The decrease in size of the multimers is accompanied by an increase in chaperone activity.

Its subcellular location is the cytoplasm. Functionally, associates with aggregated proteins, together with IbpA, to stabilize and protect them from irreversible denaturation and extensive proteolysis during heat shock and oxidative stress. Aggregated proteins bound to the IbpAB complex are more efficiently refolded and reactivated by the ATP-dependent chaperone systems ClpB and DnaK/DnaJ/GrpE. Its activity is ATP-independent. This chain is Small heat shock protein IbpB, found in Escherichia coli O7:K1 (strain IAI39 / ExPEC).